The primary structure comprises 417 residues: Phosphoglycerate kinase, cytosolic (417 aa).

Residues valine 23, aspartate 24, phenylalanine 25, asparagine 26, arginine 39, serine 61, histidine 62, glycine 64, arginine 65, arginine 132, histidine 168, and arginine 169 each contribute to the (2R)-3-phosphoglycerate site. 2 residues coordinate ADP: glycine 214 and alanine 215. Glycine 214 lines the CDP pocket. Positions 215 and 216 each coordinate AMP. Alanine 215 contributes to the ATP binding site. Alanine 215 lines the Mg(2+) pocket. Lysine 216 serves as a coordination point for (2R)-3-phosphoglycerate. Residue aspartate 219 participates in CDP binding. Aspartate 219 lines the Mg(2+) pocket. Positions 220 and 238 each coordinate ADP. AMP is bound at residue lysine 220. Position 220 (lysine 220) interacts with ATP. Position 238 (glycine 238) interacts with CDP. Residues alanine 239 and alanine 311 each coordinate AMP. Residues alanine 239 and alanine 311 each contribute to the ATP site. Residues alanine 311 and asparagine 335 each coordinate ADP. CDP-binding residues include glycine 336 and phenylalanine 341. ADP is bound by residues phenylalanine 341, glutamate 342, aspartate 374, and serine 375. Glutamate 342 lines the AMP pocket. Residues glutamate 342, aspartate 374, and serine 375 each contribute to the ATP site. Position 374 (aspartate 374) interacts with Mg(2+).

The protein belongs to the phosphoglycerate kinase family. As to quaternary structure, monomer. The cofactor is Mg(2+).

The protein resides in the cytoplasm. The catalysed reaction is (2R)-3-phosphoglycerate + ATP = (2R)-3-phospho-glyceroyl phosphate + ADP. The protein operates within carbohydrate degradation; glycolysis; pyruvate from D-glyceraldehyde 3-phosphate: step 2/5. This is Phosphoglycerate kinase, cytosolic (PGKB) from Leishmania major.